The primary structure comprises 56 residues: Endoglucanase Cel5A (56 aa).

Catalysis depends on E45, which acts as the Nucleophile.

This sequence belongs to the glycosyl hydrolase 5 (cellulase A) family.

The protein resides in the secreted. It is found in the extracellular space. It carries out the reaction Endohydrolysis of (1-&gt;4)-beta-D-glucosidic linkages in cellulose, lichenin and cereal beta-D-glucans.. Has avicelase and carboxymethylcellulase activity. In Gloeophyllum trabeum (Brown rot fungus), this protein is Endoglucanase Cel5A.